Consider the following 464-residue polypeptide: 3-isopropylmalate dehydratase large subunit (464 aa).

Residues C337, C397, and C400 each contribute to the [4Fe-4S] cluster site.

It belongs to the aconitase/IPM isomerase family. LeuC type 1 subfamily. As to quaternary structure, heterodimer of LeuC and LeuD. [4Fe-4S] cluster is required as a cofactor.

The catalysed reaction is (2R,3S)-3-isopropylmalate = (2S)-2-isopropylmalate. The protein operates within amino-acid biosynthesis; L-leucine biosynthesis; L-leucine from 3-methyl-2-oxobutanoate: step 2/4. In terms of biological role, catalyzes the isomerization between 2-isopropylmalate and 3-isopropylmalate, via the formation of 2-isopropylmaleate. This Bacillus cereus (strain AH820) protein is 3-isopropylmalate dehydratase large subunit.